The primary structure comprises 640 residues: Threonine--tRNA ligase (640 aa).

In terms of domain architecture, TGS spans 1–60 (MKITFPDGAVKEFEPGVSTADIAASISPGLKKKALAGKLNGELLDLVTPIHEDGAIEIVT). The interval 241 to 538 (DHRKLGKELE…LIEEYKGAFP (298 aa)) is catalytic. Zn(2+)-binding residues include cysteine 334, histidine 385, and histidine 515.

Belongs to the class-II aminoacyl-tRNA synthetase family. Homodimer. Zn(2+) serves as cofactor.

It is found in the cytoplasm. It catalyses the reaction tRNA(Thr) + L-threonine + ATP = L-threonyl-tRNA(Thr) + AMP + diphosphate + H(+). Functionally, catalyzes the attachment of threonine to tRNA(Thr) in a two-step reaction: L-threonine is first activated by ATP to form Thr-AMP and then transferred to the acceptor end of tRNA(Thr). Also edits incorrectly charged L-seryl-tRNA(Thr). In Listeria welshimeri serovar 6b (strain ATCC 35897 / DSM 20650 / CCUG 15529 / CIP 8149 / NCTC 11857 / SLCC 5334 / V8), this protein is Threonine--tRNA ligase.